The following is a 427-amino-acid chain: Trigger factor (427 aa).

Residues 163 to 248 (GDTVILDFEG…LHEIKTKEVP (86 aa)) form the PPIase FKBP-type domain.

This sequence belongs to the FKBP-type PPIase family. Tig subfamily.

The protein resides in the cytoplasm. It carries out the reaction [protein]-peptidylproline (omega=180) = [protein]-peptidylproline (omega=0). In terms of biological role, involved in protein export. Acts as a chaperone by maintaining the newly synthesized protein in an open conformation. Functions as a peptidyl-prolyl cis-trans isomerase. The polypeptide is Trigger factor (Listeria innocua serovar 6a (strain ATCC BAA-680 / CLIP 11262)).